We begin with the raw amino-acid sequence, 1158 residues long: Teashirt homolog 1 (1158 aa).

Disordered regions lie at residues 70-126 (DDGR…DMDT), 170-228 (INST…ANNG), and 310-341 (TGHY…EMEG). The segment covering 76-88 (LSYQNSPLSNGTN) has biased composition (polar residues). Composition is skewed to low complexity over residues 186–205 (SHAS…ASAS) and 213–228 (SSNS…ANNG). 2 C2H2-type zinc fingers span residues 288–312 (FRCK…ETGH) and 349–373 (LKCM…KTKH). Positions 310–326 (TGHYRDDNKDKEEDRGK) are enriched in basic and acidic residues. Residues 405–425 (PCSPDSISSTPGIPLAETAPT) are disordered. Residues 461–485 (LKCMECGSSHDTLQQLTAHMMVTGH) form a C2H2-type 3 zinc finger. Disordered stretches follow at residues 516 to 573 (PPTT…VEKS), 656 to 681 (LKSL…NHKS), and 693 to 748 (VTGK…VDKD). Residues 555-573 (EEKKIKQEKEDPSERVEKS) show a composition bias toward basic and acidic residues. Positions 656 to 671 (LKSLTSDSSTLIHSPS) are enriched in low complexity. Composition is skewed to basic and acidic residues over residues 693–716 (VTGK…KHLT) and 724–748 (LKER…VDKD). Positions 963-1033 (RKGRQSNWNP…NVKYQLRRTG (71 aa)) form a DNA-binding region, homeobox. 2 consecutive C2H2-type zinc fingers follow at residues 1048-1070 (FLCS…LESH) and 1115-1138 (FQCK…SKTH).

It belongs to the teashirt C2H2-type zinc-finger protein family.

It localises to the nucleus. In terms of biological role, probable transcriptional regulator involved in developmental processes. May act as a transcriptional repressor (Potential). This chain is Teashirt homolog 1 (tshz1), found in Danio rerio (Zebrafish).